Here is a 969-residue protein sequence, read N- to C-terminus: MVVRRKVHVLLIARSFHSYTPCFRVTTRGKRQRSKSKQQAKVELDHTRELDNDQATETVVDRSVGPEKDIESINKDFLQRTKGLEPDIELKQLPQIKQEFNQRYKDRYVKPSEDWYVNSWRSLTKPKIPLYKLINSDFQLITKLKAPNPMEFQPVQLMESPLNVGDFVLLKMRPNELAMCVSLPSSTMDPRYTFVTIDGTMCFATKNRVLLRIPHKLPAGIHSLIQPESHHKHLPIGTVKNFSNQTNILPIVARQLITSRYPAQISKLAWKDLPITTKKLQLLHRSLQNYMGPWQIPFFTLVGLVQKLDLNKALDDKNGINYLTSLVNNYHTVNDIPINSPTFVSTYWAIMQQQESNLWGEIHLNTALLSPISVTIIPLKSQHLYYAQVIEKLEANSYREVNKFVKLVNERKYRDISALYPSVIQLLKDFAAGNFHNNGIIVALISKIFRKIERYKDCDITRDICQDLINEITPNSIPNPLLLNMDLALPASSKLVKWQQKLYDLTNIEELQWKKSGTDDDRYDFGDLRVFCIDSETAHEIDDGVSVKNYGRDGLYTLYIHIADPTSMFPESTNVDIEGISTDILNVALKRSFTTYLPDTVVPMLPQSICHLSDLGKQGQRTKTISFSVDVKITSKCSGKSIEIMYDSFKIRKGIVSNFPKATYEDVDRILGTPNSEASPVKKDLESLSMISKLLREQRIKNSNAVIFGEGFNKGLVMLNADSEGELTEVTFSDQEETLSTILVSEMMILANTLTGRYFAENKIGGVFRCYKQLPLGEVAQQQYDSMITSTKKGIFPKLKDIVKLSSLLNSSFYTGRPFRHEMIGAKQYLTVTSPLRRFPDLINHLQIHRHLQKKPLCFNQTQIDSLIWPIQSRADILKRASRNSSTYWTLNYLKKLTKLEPERTFDVMVTSVPQNGFTGCVFPDLSFARGTLKLHPSSMHYPMIGDIVKNCKISKIDCLEGMLELEKL.

The N-terminal 41 residues, 1-41 (MVVRRKVHVLLIARSFHSYTPCFRVTTRGKRQRSKSKQQAK), are a transit peptide targeting the mitochondrion. Residues 28 to 38 (RGKRQRSKSKQ) are compositionally biased toward basic residues. The interval 28–54 (RGKRQRSKSKQQAKVELDHTRELDNDQ) is disordered. Basic and acidic residues predominate over residues 40–51 (AKVELDHTRELD). An RNB domain is found at 522–853 (RYDFGDLRVF…NHLQIHRHLQ (332 aa)).

Belongs to the RNR ribonuclease family. As to quaternary structure, MSU1 and SUV3 are the two components of the mitochondrial degradosome (mtEXO).

The protein resides in the mitochondrion matrix. It carries out the reaction Exonucleolytic cleavage in the 3'- to 5'-direction to yield nucleoside 5'-phosphates.. Functionally, essential for mitochondrial biogenesis. In terms of biological role, required for intron-independent turnover and processing of mitochondrial RNA. Participates in 3' mtRNA processing where it hydrolyzes single-stranded RNA or partially double-stranded RNA with 3' single-stranded tails. This chain is Exoribonuclease II, mitochondrial (DSS1), found in Saccharomyces cerevisiae (strain ATCC 204508 / S288c) (Baker's yeast).